Reading from the N-terminus, the 203-residue chain is WUSCHEL-related homeobox 3 (203 aa).

Residues 4-68 (TPSTRWCPTP…NHKARERQRL (65 aa)) constitute a DNA-binding region (homeobox; WUS-type). 3 disordered regions span residues 73-95 (CARHQQQPSPPSSTVPPAPTAAA), 109-135 (LHHHHHHHHPYAAAAAAQSHHLQQQQQ), and 180-203 (STSGGLKEDCCSSSKSSSCSTSTN). A compositionally biased stretch (pro residues) spans 80 to 91 (PSPPSSTVPPAP). The segment covering 109-118 (LHHHHHHHHP) has biased composition (basic residues). Low complexity-rich tracts occupy residues 119-135 (YAAAAAAQSHHLQQQQQ) and 190-203 (CSSSKSSSCSTSTN).

This sequence belongs to the WUS homeobox family.

The protein resides in the nucleus. Its function is as follows. Transcription factor which may be involved in developmental processes. This Oryza sativa subsp. indica (Rice) protein is WUSCHEL-related homeobox 3 (WOX3).